A 230-amino-acid polypeptide reads, in one-letter code: Ribonuclease 3 (230 aa).

Positions 1-134 (MKQLEELLST…FLGALLLDKG (134 aa)) constitute an RNase III domain. Mg(2+) is bound at residue glutamate 47. Residue aspartate 51 is part of the active site. Aspartate 120 and glutamate 123 together coordinate Mg(2+). Glutamate 123 is a catalytic residue. The DRBM domain maps to 160 to 229 (DYKTCLQEFL…AKNALAQLSE (70 aa)).

Belongs to the ribonuclease III family. Homodimer. It depends on Mg(2+) as a cofactor.

The protein resides in the cytoplasm. The enzyme catalyses Endonucleolytic cleavage to 5'-phosphomonoester.. In terms of biological role, digests double-stranded RNA. Involved in the processing of primary rRNA transcript to yield the immediate precursors to the large and small rRNAs (23S and 16S). Processes some mRNAs, and tRNAs when they are encoded in the rRNA operon. Processes pre-crRNA and tracrRNA of type II CRISPR loci if present in the organism. This Streptococcus pyogenes serotype M49 (strain NZ131) protein is Ribonuclease 3.